A 262-amino-acid polypeptide reads, in one-letter code: Homeobox protein Nkx-6.3 (262 aa).

The segment at residues 140–199 (KKHTRPTFTGHQIFALEKTFEQTKYLAGPERARLAYSLGMTESQVKVWFQNRRTKWRKKS) is a DNA-binding region (homeobox). Residues 197–237 (KKSALEPSSSTPRAPGGASGDRAASENEDDEYNKPLDPDSD) form a disordered region.

In terms of tissue distribution, expressed in the developing CNS and gastro-intestinal tract.

It is found in the nucleus. In terms of biological role, putative transcription factor, which may be involved in patterning of central nervous system and pancreas. The protein is Homeobox protein Nkx-6.3 (Nkx6-3) of Mus musculus (Mouse).